The following is a 132-amino-acid chain: MVRVVSLLAASTFILLIMIISSPYANSQNICPRVNRIVTPCVAYGLGRAPIAPCCRALNDLRFVNTRNLRRAACRCLVGVVNRNPGLRRNPRFQNIPRDCRNTFVRPFWWRPRIQCGRINLTDKLIYLDAEE.

The first 27 residues, 1-27 (MVRVVSLLAASTFILLIMIISSPYANS), serve as a signal peptide directing secretion. 4 cysteine pairs are disulfide-bonded: cysteine 31-cysteine 76, cysteine 41-cysteine 54, cysteine 55-cysteine 100, and cysteine 74-cysteine 116.

Belongs to the plant LTP family. Highly divergent. In terms of assembly, monomer.

Antifungal and antibacterial activity against the Gram-positive bacteria B.megaterium and S.lutea. This is Antimicrobial protein Ace-AMP1 from Allium cepa (Onion).